A 108-amino-acid polypeptide reads, in one-letter code: MLLFCPGCGNGLIVEEGQRCHRFACNTCPYVHNVTRKVTNRKYPKLKEVDDELGGAAAWENVDSTAEPCPKCEHPRAYFMQLQTRYADEPMTTFYKCCNAQCGHRWRD.

Zn(2+) is bound by residues C5, C8, C25, C28, C69, and C72. The C4-type zinc-finger motif lies at 5–28 (CPGCGNGLIVEEGQRCHRFACNTC). The TFIIS-type zinc-finger motif lies at 65–107 (TAEPCPKCEHPRAYFMQLQTRYADEPMTTFYKCCNAQCGHRWR). The Hairpin signature appears at 88–89 (DE). Zn(2+)-binding residues include C98 and C102.

This sequence belongs to the archaeal RpoM/eukaryotic RPA12/RPB9/RPC11 RNA polymerase family. In terms of assembly, component of the RNA polymerase III complex consisting of 17 subunits: a ten-subunit horseshoe-shaped catalytic core composed of POLR3A/RPC1, POLR3B/RPC2, POLR1C/RPAC1, POLR1D/RPAC2, POLR3K/RPC10, POLR2E/RPABC1, POLR2F/RPABC2, POLR2H/RPABC3, POLR2K/RPABC4 and POLR2L/RPABC5; a mobile stalk composed of two subunits POLR3H/RPC8 and CRCP/RPC9, protruding from the core and functioning primarily in transcription initiation; and additional subunits homologous to general transcription factors of the RNA polymerase II machinery, POLR3C/RPC3-POLR3F/RPC6-POLR3G/RPC7 heterotrimer required for transcription initiation and POLR3D/RPC4-POLR3E/RPC5 heterodimer involved in both transcription initiation and termination.

It localises to the nucleus. In terms of biological role, core component of RNA polymerase III (Pol III) which synthesizes small non-coding RNAs using the four ribonucleoside triphosphates as substrates. Can mediate Pol I proofreading of the nascent RNA transcript. Anchors into the Pol III active site to constantly monitor transcription fidelity, cleaves mis-incorporated 5'-ribonucleotides and restarts the transcription process. Once Pol III reaches the poly(dT) termination signal, can induce Pol III clamp opening and transcription termination. Pol III plays an important role in sensing and limiting infection by intracellular bacteria and DNA viruses. Acts as a nuclear and cytosolic DNA sensor involved in innate immune response. Can sense non-self dsDNA that serves as template for transcription into dsRNA. The non-self RNA polymerase III transcripts, such as Epstein-Barr virus-encoded RNAs (EBERs) induce type I interferon and NF-kappa-B through the RIG-I pathway. In Bos taurus (Bovine), this protein is DNA-directed RNA polymerase III subunit RPC10 (POLR3K).